A 500-amino-acid chain; its full sequence is Ent-kaurene oxidase P450-4 (500 aa).

The helical transmembrane segment at 6-26 (VHWLIYVAFGAWLCSYVIHVL) threads the bilayer. An N-linked (GlcNAc...) asparagine glycan is attached at N240. C441 is a heme binding site. N475 is a glycosylation site (N-linked (GlcNAc...) asparagine).

It belongs to the cytochrome P450 family. It depends on heme as a cofactor.

Its subcellular location is the membrane. It catalyses the reaction ent-kaur-16-ene + 3 reduced [NADPH--hemoprotein reductase] + 3 O2 = ent-kaur-16-en-19-oate + 3 oxidized [NADPH--hemoprotein reductase] + 4 H2O + 4 H(+). Its pathway is plant hormone biosynthesis; gibberellin biosynthesis. In terms of biological role, ent-kaurene oxidase; part of the gene cluster that mediates the biosynthesis of gibberellins (GAs), diterpenoids that may provide a selective advantage during infection of the preferred host plant, rice. Gibberellins (GAs) are diterpenoids and are synthesized via the mevalonate pathway. Biosynthesis of the major metabolite GA3 (gibberellic acid) from geranylgeranyl diphosphate (GGPP) requires 13 steps. The GGPP produced by the geranylgeranyl diphosphate synthase GGS2 is converted to ent-kaurene via ent-copalyldiphosphate in a two-step cyclization reaction performed by the bifunctional ent-copalyl diphosphate synthase/ent-kaurene synthase enzyme (CPS/KS). Ent-Kaurene is metabolized to GAs by a series of oxidation reactions catalyzed by cytochrome P450 monooxygenases. Cytochrome P450 monooxygenase P450-4 is an ent-kaurene oxidase that catalyzes the three oxidation steps between ent-kaurene and ent-kaurenoic acid. The highly multifunctional cytochrome P450 monooxygenase P450-1 then catalyzes four steps involving oxidation at two carbon atoms, in the main pathway from ent-kaurenoic acid to GA14 via GA12-aldehyde as well as producing kaurenolides and fujenoic acids as by-products. The cytochrome P450 monooxygenase P450-2 then converts GA14 to GA4 by removal of C-20. GA4 is further converted to GA7 by the GA4 desaturase DES via 1,2-desaturation before cytochrome P450 monooxygenase P450-3, a 13-hydroxylase, hydroxylates GA7 to GA3, the final product of the GA-biosynthetic pathway. In Gibberella fujikuroi (strain CBS 195.34 / IMI 58289 / NRRL A-6831) (Bakanae and foot rot disease fungus), this protein is Ent-kaurene oxidase P450-4.